The primary structure comprises 1081 residues: Protein QUIRKY (1081 aa).

Residues M1–Y124 form the C2 1 domain. Disordered regions lie at residues D154–P198 and P238–K323. Residues Q163 to Q176 show a composition bias toward low complexity. Residues N248 to P257 are compositionally biased toward basic and acidic residues. Pro residues predominate over residues Q258–S268. 3 C2 domains span residues T318 to Y440, S477 to H605, and V652 to Y778. E351, S352, D408, and S413 together coordinate Ca(2+). Transmembrane regions (helical) follow at residues W879 to I899, L916 to I936, and L1024 to V1044.

The protein belongs to the MCTP family. Interacts with SUB/SCM and POQ at the plasma membrane. Binds to SUB/SCM at plasmodesmata (PD) in root epidermal cells to promote tissue morphogenesis. Ca(2+) is required as a cofactor. Observed mainly in flowers, and, to a lower extent, in seedlings, roots, shoots, leaves, stems and inflorescences. Expressed in the vascular tissues of roots, cotyledons and rosette leaves. Accumulates in roots meristems.

It localises to the cell membrane. Its subcellular location is the cytoplasm. It is found in the golgi apparatus membrane. The protein localises to the cell junction. The protein resides in the plasmodesma. In terms of biological role, may be involved in Ca 2(+)-dependent signaling and membrane trafficking. Plays a role in fruit dehiscence. Components of the machinery involved in organ development mediated by the receptor-like kinase STRUBBELIG (SUB). Collaboratively with SUB and POQ, regulates cell growth anisotropy during gynoecium development, thus linking together cell-cell communication and cellular growth. Together with SUB/SCM, links RLK-dependent signal transduction and intercellular communication mediated by plasmodesmata (PD) to regulate tissue morphogenesis. May function as a signaling molecule by regulating the trafficking of other regulators. In Arabidopsis thaliana (Mouse-ear cress), this protein is Protein QUIRKY.